The primary structure comprises 389 residues: Trans-2-enoyl-CoA reductase [NADH] (389 aa).

NAD(+) contacts are provided by residues 47–52, 73–74, 110–111, and 138–139; these read GASTGY, FE, DA, and LA. Tyr-224 is a substrate binding site. The Proton donor role is filled by Tyr-234. NAD(+)-binding positions include Lys-243 and 272–274; that span reads LVT.

This sequence belongs to the TER reductase family. Monomer.

The catalysed reaction is a 2,3-saturated acyl-CoA + NAD(+) = a (2E)-enoyl-CoA + NADH + H(+). It functions in the pathway lipid metabolism; fatty acid biosynthesis. Functionally, involved in the fatty acid synthesis (FAS II). Catalyzes the reduction of a carbon-carbon double bond in an enoyl moiety that is covalently linked to a coenzyme A (CoA). This chain is Trans-2-enoyl-CoA reductase [NADH], found in Clostridium perfringens (strain 13 / Type A).